The primary structure comprises 486 residues: Glutamyl-tRNA(Gln) amidotransferase subunit A (486 aa).

Residues K79 and S154 each act as charge relay system in the active site. S178 serves as the catalytic Acyl-ester intermediate.

The protein belongs to the amidase family. GatA subfamily. Heterotrimer of A, B and C subunits.

It catalyses the reaction L-glutamyl-tRNA(Gln) + L-glutamine + ATP + H2O = L-glutaminyl-tRNA(Gln) + L-glutamate + ADP + phosphate + H(+). Allows the formation of correctly charged Gln-tRNA(Gln) through the transamidation of misacylated Glu-tRNA(Gln) in organisms which lack glutaminyl-tRNA synthetase. The reaction takes place in the presence of glutamine and ATP through an activated gamma-phospho-Glu-tRNA(Gln). The chain is Glutamyl-tRNA(Gln) amidotransferase subunit A from Myxococcus xanthus (strain DK1622).